The following is a 121-amino-acid chain: Fumarate reductase subunit D (121 aa).

The next 3 membrane-spanning stretches (helical) occupy residues 22 to 42, 57 to 77, and 100 to 120; these read GVWFAMITPVTVLLMGILLPL, AFVSHPIGGAFTVLSLSLPMW, and YACYLAAALVTVLATVWVIQL.

This sequence belongs to the FrdD family. In terms of assembly, part of an enzyme complex containing four subunits: a flavoprotein (FrdA), an iron-sulfur protein (FrdB), and two hydrophobic anchor proteins (FrdC and FrdD).

It is found in the cell inner membrane. Functionally, anchors the catalytic components of the fumarate reductase complex to the cell membrane, binds quinones. In Shewanella putrefaciens (strain CN-32 / ATCC BAA-453), this protein is Fumarate reductase subunit D.